The primary structure comprises 425 residues: CDP-diacylglycerol--serine O-phosphatidyltransferase 1 (425 aa).

Positions 1 to 16 (MEPNGYRKERRKEQHL) are enriched in basic and acidic residues. Residues 1–23 (MEPNGYRKERRKEQHLGRMNGGG) form a disordered region. Helical transmembrane passes span 42–62 (TISLLLIGACFLIWASGALDP), 79–99 (WAMIAVFLAYSLLQAPSTVLI), 105–125 (IWRLVHGMAVIYLVALTFLLF), 197–217 (PLLWVLSIGFELLEVTFRHML), 227–247 (SIVLDILICNWFGIWAGMYTV), 296–316 (FIQVLTLCIIFLTVELNTFFL), 321–341 (WIPPRNPVILYRLILWWLIAI), 361–381 (GAFCWLSLGICIVELLICIKF), and 390–410 (MPLWVVTLWGSVGLGLVAFLL).

It belongs to the CDP-alcohol phosphatidyltransferase class-I family. As to expression, expressed in trichomes, leaf veins and root vasculature.

The protein localises to the endoplasmic reticulum membrane. Its subcellular location is the nucleus envelope. It catalyses the reaction a CDP-1,2-diacyl-sn-glycerol + L-serine = a 1,2-diacyl-sn-glycero-3-phospho-L-serine + CMP + H(+). It participates in phospholipid metabolism; phosphatidylethanolamine biosynthesis; phosphatidylethanolamine from CDP-diacylglycerol: step 1/2. In terms of biological role, catalyzes a base-exchange reaction in which the polar head group of phosphatidylethanolamine (PE) or phosphatidylcholine (PC) is replaced by L-serine. Is essential for phosphatidylserine (PS) biosynthesis and PE seems to be the most plausible substrate. Plays an important role in microspore maturation. This Arabidopsis thaliana (Mouse-ear cress) protein is CDP-diacylglycerol--serine O-phosphatidyltransferase 1 (PSS1).